We begin with the raw amino-acid sequence, 411 residues long: LL-diaminopimelate aminotransferase (411 aa).

Residues Tyr-15 and Gly-42 each contribute to the substrate site. Pyridoxal 5'-phosphate is bound by residues Tyr-72, 108–109, Tyr-132, Asn-188, Tyr-219, and 247–249; these read AK and SFS. Substrate-binding residues include Lys-109, Tyr-132, and Asn-188. Lys-250 carries the N6-(pyridoxal phosphate)lysine modification. Residues Arg-258 and Asn-293 each coordinate pyridoxal 5'-phosphate. Substrate-binding residues include Asn-293 and Arg-389.

It belongs to the class-I pyridoxal-phosphate-dependent aminotransferase family. LL-diaminopimelate aminotransferase subfamily. Homodimer. Requires pyridoxal 5'-phosphate as cofactor.

The catalysed reaction is (2S,6S)-2,6-diaminopimelate + 2-oxoglutarate = (S)-2,3,4,5-tetrahydrodipicolinate + L-glutamate + H2O + H(+). Its pathway is amino-acid biosynthesis; L-lysine biosynthesis via DAP pathway; LL-2,6-diaminopimelate from (S)-tetrahydrodipicolinate (aminotransferase route): step 1/1. Involved in the synthesis of meso-diaminopimelate (m-DAP or DL-DAP), required for both lysine and peptidoglycan biosynthesis. Catalyzes the direct conversion of tetrahydrodipicolinate to LL-diaminopimelate. Is also able to catalyze the reverse reaction in vitro, i.e. the transamination of LL-diaminopimelate with 2-oxoglutarate to produce tetrahydrodipicolinate and glutamate. Can also use m-DAP instead of LL-DAP as the amino-group donor, and oxaloacetate or pyruvate as the amino-group acceptor. This is LL-diaminopimelate aminotransferase from Desulfitobacterium hafniense (strain DSM 10664 / DCB-2).